A 440-amino-acid polypeptide reads, in one-letter code: Ribosomal protein uS12 methylthiotransferase RimO (440 aa).

An MTTase N-terminal domain is found at 6–116; that stretch reads PKVGFVSLGC…VVTAVHEVVP (111 aa). Residues cysteine 15, cysteine 51, cysteine 80, cysteine 149, cysteine 153, and cysteine 156 each contribute to the [4Fe-4S] cluster site. Positions 135–373 constitute a Radical SAM core domain; it reads LTPRHYAYLK…MAHQQAISAA (239 aa). Residues 376 to 440 form the TRAM domain; it reads QLKVGKEIEV…DEYDLWAEPV (65 aa).

It belongs to the methylthiotransferase family. RimO subfamily. [4Fe-4S] cluster is required as a cofactor.

The protein resides in the cytoplasm. It catalyses the reaction L-aspartate(89)-[ribosomal protein uS12]-hydrogen + (sulfur carrier)-SH + AH2 + 2 S-adenosyl-L-methionine = 3-methylsulfanyl-L-aspartate(89)-[ribosomal protein uS12]-hydrogen + (sulfur carrier)-H + 5'-deoxyadenosine + L-methionine + A + S-adenosyl-L-homocysteine + 2 H(+). Functionally, catalyzes the methylthiolation of an aspartic acid residue of ribosomal protein uS12. In Pseudomonas paraeruginosa (strain DSM 24068 / PA7) (Pseudomonas aeruginosa (strain PA7)), this protein is Ribosomal protein uS12 methylthiotransferase RimO.